Here is a 250-residue protein sequence, read N- to C-terminus: Pyrroloquinoline-quinone synthase (250 aa).

It belongs to the PqqC family.

It catalyses the reaction 6-(2-amino-2-carboxyethyl)-7,8-dioxo-1,2,3,4,7,8-hexahydroquinoline-2,4-dicarboxylate + 3 O2 = pyrroloquinoline quinone + 2 H2O2 + 2 H2O + H(+). It participates in cofactor biosynthesis; pyrroloquinoline quinone biosynthesis. Its function is as follows. Ring cyclization and eight-electron oxidation of 3a-(2-amino-2-carboxyethyl)-4,5-dioxo-4,5,6,7,8,9-hexahydroquinoline-7,9-dicarboxylic-acid to PQQ. The chain is Pyrroloquinoline-quinone synthase from Xanthomonas axonopodis pv. citri (strain 306).